Consider the following 539-residue polypeptide: Berberine bridge enzyme-like 21 (539 aa).

The signal sequence occupies residues 1 to 26; the sequence is MIATQTFVSVFFFVFFLVSLPFFSSA. A disulfide bond links Cys41 and Cys104. An N-linked (GlcNAc...) asparagine glycan is attached at Asn79. One can recognise an FAD-binding PCMH-type domain in the interval 82-256; the sequence is STPKPAIIVT…LGYKVKLVPV (175 aa). Positions 119-181 form a cross-link, 6-(S-cysteinyl)-8alpha-(pros-histidyl)-FAD (His-Cys); the sequence is HDYEGLSYIS…KVHGFPAGVC (63 aa). Residue Asn340 is glycosylated (N-linked (GlcNAc...) asparagine).

It belongs to the oxygen-dependent FAD-linked oxidoreductase family. The cofactor is FAD. Post-translationally, the FAD cofactor is bound via a bicovalent 6-S-cysteinyl, 8alpha-N1-histidyl FAD linkage.

Its subcellular location is the secreted. The protein localises to the cell wall. The protein is Berberine bridge enzyme-like 21 of Arabidopsis thaliana (Mouse-ear cress).